A 230-amino-acid polypeptide reads, in one-letter code: tRNA (guanine-N(1)-)-methyltransferase (230 aa).

S-adenosyl-L-methionine-binding positions include G114 and 138–143; that span reads IGDYVL.

It belongs to the RNA methyltransferase TrmD family. Homodimer.

The protein resides in the cytoplasm. It carries out the reaction guanosine(37) in tRNA + S-adenosyl-L-methionine = N(1)-methylguanosine(37) in tRNA + S-adenosyl-L-homocysteine + H(+). In terms of biological role, specifically methylates guanosine-37 in various tRNAs. This Rhodococcus jostii (strain RHA1) protein is tRNA (guanine-N(1)-)-methyltransferase.